Here is a 448-residue protein sequence, read N- to C-terminus: T-box transcription factor T homolog 1 (448 aa).

Residues 54 to 224 (LWDKFNALTN…YNPFAKAFLD (171 aa)) constitute a DNA-binding region (T-box). 2 disordered regions span residues 290–312 (APYPHPYQRSSPPTNYGHDTAAS) and 401–448 (TTAS…PPSL). The span at 417-442 (STDSGYGHSTTPPAPQTRITSNNWSP) shows a compositional bias: polar residues.

It is found in the nucleus. In terms of biological role, involved in the transcriptional regulation of genes required for mesoderm formation and differentiation. The polypeptide is T-box transcription factor T homolog 1 (Branchiostoma floridae (Florida lancelet)).